The following is a 417-amino-acid chain: Neuropeptide FF receptor 2 (417 aa).

Over 1 to 45 (MSEKWDSNSSESWNHIWSGNDTQHHWYSDINITYVNYYLHQPQVA) the chain is Extracellular. N-linked (GlcNAc...) asparagine glycans are attached at residues N8, N20, and N31. A helical membrane pass occupies residues 46–66 (AVFISSYLLIFVLCMVGNTVV). Topologically, residues 67 to 82 (CFIVIRNRHMHTVTNF) are cytoplasmic. Residues 83–103 (FILNLAISDLLVGIFCMPITL) form a helical membrane-spanning segment. Residues 104–119 (LDNIIAGWPFGSSMCK) are Extracellular-facing. Residues C118 and C206 are joined by a disulfide bond. Residues 120–140 (ISGLVQGISVAASVFTLVAIA) traverse the membrane as a helical segment. The Cytoplasmic segment spans residues 141 to 160 (VDRFRCVVYPFKPKLTVKTA). Residues 161-181 (FVTIVIIWGLAIAIMTPSAIM) traverse the membrane as a helical segment. Residues 182 to 217 (LHVQEEKYYRVRLSSHNKTSTVYWCREDWPRHEMRR) are Extracellular-facing. N198 carries an N-linked (GlcNAc...) asparagine glycan. Residues 218–238 (IYTTVLFATIYLAPLSLIVIM) form a helical membrane-spanning segment. Topologically, residues 239–274 (YARIGASLFKTAAHCTGKQRPVQWHVSKKKQKVIKM) are cytoplasmic. Residues 275 to 295 (LLTVALLFILSWLPLWTLMML) traverse the membrane as a helical segment. Residues 296–310 (SDYTDLSPNKLRIIN) lie on the Extracellular side of the membrane. Residues 311–331 (IYIYPFAHWLAFCNSSVNPII) form a helical membrane-spanning segment. Residues 332-417 (YGFFNENFRN…MGEATNSTVA (86 aa)) lie on the Cytoplasmic side of the membrane. Positions 382–401 (SQNPGGENLGCGKSADNPTQ) are disordered.

The protein belongs to the G-protein coupled receptor 1 family.

Its subcellular location is the cell membrane. In terms of biological role, receptor for NPAF (A-18-F-amide) and NPFF (F-8-F-amide) neuropeptides, also known as morphine-modulating peptides. Can also be activated by a variety of naturally occurring or synthetic FMRF-amide like ligands. This receptor mediates its action by association with G proteins that activate a phosphatidylinositol-calcium second messenger system. The sequence is that of Neuropeptide FF receptor 2 (Npffr2) from Mus musculus (Mouse).